Reading from the N-terminus, the 68-residue chain is Protein transport protein Sec61 gamma-2 subunit (68 aa).

At 1 to 32 (MDKVVKFAEPGRAFAKDSIRLVKRCTKPDRKE) the chain is on the cytoplasmic side. The chain crosses the membrane as a helical span at residues 33–61 (FQKIAIATAVGFCIMGFIGFFVKLIHIPI). The Extracellular segment spans residues 62–68 (NNIIVGS).

It belongs to the SecE/SEC61-gamma family. In terms of assembly, heterotrimeric complex composed of SEC61-alpha, SEC61-beta and SEC61-gamma.

The protein localises to the endoplasmic reticulum membrane. In terms of biological role, necessary for protein translocation in the endoplasmic reticulum. The protein is Protein transport protein Sec61 gamma-2 subunit (Sec61gamma) of Drosophila melanogaster (Fruit fly).